The sequence spans 95 residues: Large ribosomal subunit protein uL23 (95 aa).

Belongs to the universal ribosomal protein uL23 family. In terms of assembly, part of the 50S ribosomal subunit. Contacts protein L29.

Functionally, binds to 23S rRNA. One of the proteins that surrounds the polypeptide exit tunnel on the outside of the ribosome. In Methanopyrus kandleri (strain AV19 / DSM 6324 / JCM 9639 / NBRC 100938), this protein is Large ribosomal subunit protein uL23.